A 436-amino-acid chain; its full sequence is 3-ketoacyl-CoA thiolase (436 aa).

Cys-99 (acyl-thioester intermediate) is an active-site residue. Residues His-392 and Cys-422 each act as proton acceptor in the active site.

It belongs to the thiolase-like superfamily. Thiolase family. Heterotetramer of two alpha chains (FadJ) and two beta chains (FadI).

Its subcellular location is the cytoplasm. It catalyses the reaction an acyl-CoA + acetyl-CoA = a 3-oxoacyl-CoA + CoA. Its pathway is lipid metabolism; fatty acid beta-oxidation. In terms of biological role, catalyzes the final step of fatty acid oxidation in which acetyl-CoA is released and the CoA ester of a fatty acid two carbons shorter is formed. This is 3-ketoacyl-CoA thiolase from Salmonella schwarzengrund (strain CVM19633).